The following is a 276-amino-acid chain: Putative pyruvate, phosphate dikinase regulatory protein (276 aa).

G153–T160 contacts ADP.

The protein belongs to the pyruvate, phosphate/water dikinase regulatory protein family. PDRP subfamily.

The enzyme catalyses N(tele)-phospho-L-histidyl/L-threonyl-[pyruvate, phosphate dikinase] + ADP = N(tele)-phospho-L-histidyl/O-phospho-L-threonyl-[pyruvate, phosphate dikinase] + AMP + H(+). It carries out the reaction N(tele)-phospho-L-histidyl/O-phospho-L-threonyl-[pyruvate, phosphate dikinase] + phosphate + H(+) = N(tele)-phospho-L-histidyl/L-threonyl-[pyruvate, phosphate dikinase] + diphosphate. Functionally, bifunctional serine/threonine kinase and phosphorylase involved in the regulation of the pyruvate, phosphate dikinase (PPDK) by catalyzing its phosphorylation/dephosphorylation. In Brucella anthropi (strain ATCC 49188 / DSM 6882 / CCUG 24695 / JCM 21032 / LMG 3331 / NBRC 15819 / NCTC 12168 / Alc 37) (Ochrobactrum anthropi), this protein is Putative pyruvate, phosphate dikinase regulatory protein.